The following is a 222-amino-acid chain: ATP-dependent Clp protease proteolytic subunit 1 (222 aa).

The active-site Nucleophile is S121. H146 is a catalytic residue.

Belongs to the peptidase S14 family. In terms of assembly, fourteen ClpP subunits assemble into 2 heptameric rings which stack back to back to give a disk-like structure with a central cavity, resembling the structure of eukaryotic proteasomes.

It localises to the cytoplasm. It carries out the reaction Hydrolysis of proteins to small peptides in the presence of ATP and magnesium. alpha-casein is the usual test substrate. In the absence of ATP, only oligopeptides shorter than five residues are hydrolyzed (such as succinyl-Leu-Tyr-|-NHMec, and Leu-Tyr-Leu-|-Tyr-Trp, in which cleavage of the -Tyr-|-Leu- and -Tyr-|-Trp bonds also occurs).. In terms of biological role, cleaves peptides in various proteins in a process that requires ATP hydrolysis. Has a chymotrypsin-like activity. Plays a major role in the degradation of misfolded proteins. The chain is ATP-dependent Clp protease proteolytic subunit 1 from Thermobifida fusca (strain YX).